Consider the following 686-residue polypeptide: Acyl-CoA synthetase short-chain family member 3, mitochondrial (686 aa).

Residues 1–29 constitute a mitochondrion transit peptide; that stretch reads MKPSWLQCHKVTSAGGLGGPLPGSSPARG. Residue 227-230 coordinates CoA; that stretch reads EPGR. ATP contacts are provided by residues 425–427 and 446–451; these read GER and DHWWQT. Residue Lys518 is modified to N6-succinyllysine. The residue at position 524 (Lys524) is an N6-acetyllysine. ATP is bound by residues Asp539, Arg554, and Arg565. Arg624 provides a ligand contact to CoA.

Belongs to the ATP-dependent AMP-binding enzyme family.

It localises to the mitochondrion matrix. The catalysed reaction is acetate + ATP + CoA = acetyl-CoA + AMP + diphosphate. It catalyses the reaction propanoate + ATP + CoA = propanoyl-CoA + AMP + diphosphate. It carries out the reaction butanoate + ATP + CoA = butanoyl-CoA + AMP + diphosphate. In terms of biological role, catalyzes the synthesis of acetyl-CoA from short-chain fatty acids. Propionate is the preferred substrate but can also utilize acetate and butyrate with a much lower affinity. The polypeptide is Acyl-CoA synthetase short-chain family member 3, mitochondrial (ACSS3) (Pongo abelii (Sumatran orangutan)).